The chain runs to 874 residues: MEDKNKTIKETLQGSADAGKRKKLIIKKKGDDPSTPSPAASPKKETVAESAPSSKPPVMPLPLPGDSGQSPIVRPAPSSHSPAKREESPGKQDAGRPPRDKDTRQGGGSSYPPSRSPFQKEDSNIIVSRPIQRTGPSRPNSGGGYQGNRGPGQGGGGYQGNRGPGQGGGGYQGNRGPGQGGGGYQGNRGPGQGGGGYQGNRGPGQGGGGYQGNRGPRSGGTGTRPMPITSAEVELSQSRGSSVTSKKKGHDKEKSTSDRDFSGAENTKFFKQKFKKTKVVGVSGVSVPKEITLLENVQVGELAKKMNLKPGDVIGKLMKMGMMVTINNIIDAETAALLADEYGCKVKVVSLYEETIIEEEKDNQEDYINRPPVVTIMGHVDHGKTKLLDTIRRSSVIDTESGGITQHIGAYQVRTARGLITFLDTPGHEAFTSMRARGAKVTDIVVLVVAADDGVMPQTLEAISHAKAAEVPILVAINKIDLPAANPEKIMQELANHGLQSEEWGGETMYAKISARENIGIDKLLEMILLQAEVMDLKANPKRRAKGTIIEAKLDPGRGSVATVLIQNGTLRVGDPFVAGVFSGRVRAMYNDLGQLIQEAGPAFPAQVTGIDGVPDAGAPFDAMADEKEARNISQHRIEFERIGNAGAATGTSSKVTLENMNEFIKQGALKELKVIIKADVRGSAEAIKESLEKLSTPEVKLNVIQSGAGAIVDMDVMLASASNALIIGFHVRANPKTIALAEKEGVQIKYYNIIYQVVDEIKLAMEGLLEPEKIEEVIGTAEIREIFKVSKIGNIAGCMVLSGKIQKSANIRVIGDGVTKFEGKLKSLKRVKDDVNDVVAGFECGIQVDGYNDFKVGDTIEAYNVTVIKRKLE.

The tract at residues 1 to 262 (MEDKNKTIKE…EKSTSDRDFS (262 aa)) is disordered. A compositionally biased stretch (pro residues) spans 54–63 (SKPPVMPLPL). A compositionally biased stretch (basic and acidic residues) spans 83 to 104 (AKREESPGKQDAGRPPRDKDTR). A compositionally biased stretch (gly residues) spans 141 to 222 (SGGGYQGNRG…NRGPRSGGTG (82 aa)). The span at 235 to 244 (LSQSRGSSVT) shows a compositional bias: polar residues. Residues 250–262 (HDKEKSTSDRDFS) are compositionally biased toward basic and acidic residues. Positions 369 to 538 (NRPPVVTIMG…LLQAEVMDLK (170 aa)) constitute a tr-type G domain. Residues 378–385 (GHVDHGKT) are G1. 378–385 (GHVDHGKT) contacts GTP. The tract at residues 403 to 407 (GITQH) is G2. The segment at 424–427 (DTPG) is G3. Residues 424 to 428 (DTPGH) and 478 to 481 (NKID) contribute to the GTP site. Positions 478–481 (NKID) are G4. Residues 514–516 (SAR) are G5.

The protein belongs to the TRAFAC class translation factor GTPase superfamily. Classic translation factor GTPase family. IF-2 subfamily.

It is found in the cytoplasm. One of the essential components for the initiation of protein synthesis. Protects formylmethionyl-tRNA from spontaneous hydrolysis and promotes its binding to the 30S ribosomal subunits. Also involved in the hydrolysis of GTP during the formation of the 70S ribosomal complex. The protein is Translation initiation factor IF-2 of Leptospira interrogans serogroup Icterohaemorrhagiae serovar copenhageni (strain Fiocruz L1-130).